Here is a 116-residue protein sequence, read N- to C-terminus: UPF0482 protein ECA2253 (116 aa).

Residues 1-31 (MNHYSFSSLIRALIPLSLVIVSAVWQPAALA) form the signal peptide.

It belongs to the UPF0482 family.

This is UPF0482 protein ECA2253 from Pectobacterium atrosepticum (strain SCRI 1043 / ATCC BAA-672) (Erwinia carotovora subsp. atroseptica).